Consider the following 491-residue polypeptide: Protein nucleotidyltransferase YdiU (491 aa).

Residues G92, G94, R95, K115, D127, G128, R178, and R185 each coordinate ATP. D254 (proton acceptor) is an active-site residue. Residues N255 and D264 each contribute to the Mg(2+) site. D264 lines the ATP pocket.

This sequence belongs to the SELO family. Mg(2+) is required as a cofactor. The cofactor is Mn(2+).

The catalysed reaction is L-seryl-[protein] + ATP = 3-O-(5'-adenylyl)-L-seryl-[protein] + diphosphate. The enzyme catalyses L-threonyl-[protein] + ATP = 3-O-(5'-adenylyl)-L-threonyl-[protein] + diphosphate. It catalyses the reaction L-tyrosyl-[protein] + ATP = O-(5'-adenylyl)-L-tyrosyl-[protein] + diphosphate. It carries out the reaction L-histidyl-[protein] + UTP = N(tele)-(5'-uridylyl)-L-histidyl-[protein] + diphosphate. The catalysed reaction is L-seryl-[protein] + UTP = O-(5'-uridylyl)-L-seryl-[protein] + diphosphate. The enzyme catalyses L-tyrosyl-[protein] + UTP = O-(5'-uridylyl)-L-tyrosyl-[protein] + diphosphate. In terms of biological role, nucleotidyltransferase involved in the post-translational modification of proteins. It can catalyze the addition of adenosine monophosphate (AMP) or uridine monophosphate (UMP) to a protein, resulting in modifications known as AMPylation and UMPylation. This Pseudarthrobacter chlorophenolicus (strain ATCC 700700 / DSM 12829 / CIP 107037 / JCM 12360 / KCTC 9906 / NCIMB 13794 / A6) (Arthrobacter chlorophenolicus) protein is Protein nucleotidyltransferase YdiU.